The following is an 86-amino-acid chain: Allergen Api g 5 (86 aa).

N62 carries an N-linked (GlcNAc...) asparagine glycan.

The protein belongs to the oxygen-dependent FAD-linked oxidoreductase family. Requires FAD as cofactor. Carries MUXF and MMXF, two complex N-linked glycans with alpha-1,3-fucose and beta-1,2-xylose residues in their structures. MMXF is added to Asn-62.

In Apium graveolens (Celery), this protein is Allergen Api g 5.